The sequence spans 105 residues: Small ribosomal subunit protein uS10 (105 aa).

Belongs to the universal ribosomal protein uS10 family. In terms of assembly, part of the 30S ribosomal subunit.

Its function is as follows. Involved in the binding of tRNA to the ribosomes. The chain is Small ribosomal subunit protein uS10 from Trichodesmium erythraeum (strain IMS101).